The sequence spans 398 residues: Histone-lysine N-methyltransferase ASHR2 (398 aa).

In terms of domain architecture, SET spans 11-270 (TLLRVAEIGG…EGREVCLSYF (260 aa)).

This sequence belongs to the class V-like SAM-binding methyltransferase superfamily. Histone-lysine methyltransferase family. SET2 subfamily.

The protein localises to the nucleus. It is found in the chromosome. It carries out the reaction L-lysyl-[histone] + S-adenosyl-L-methionine = N(6)-methyl-L-lysyl-[histone] + S-adenosyl-L-homocysteine + H(+). Functionally, histone methyltransferase. The protein is Histone-lysine N-methyltransferase ASHR2 (ASHR2) of Arabidopsis thaliana (Mouse-ear cress).